The following is a 339-amino-acid chain: MKLWKRAAVVLKDGPSLIAADDILTAAVVKATSHDELSIDTESAQFIYRHVLSSPSSLKPLVSLISSRVKRTRSWAVALKGLMLMHGFFLCKSTVAESIGRLPFDLSSFGEGNSRIMSKSGGFNLFVRAYFAFLDRRSILFHDGNRHRYNEESSVLIRLVIIRKMQIIVDSLIRIKPIGENMMIPVINEAMENVVSEIMEIYGWICRRIAEVLPNVHSKIGKTEADLALKIVAKSMKQGGELKKYFEFCKDLGVSNAQEIPNFVRIPEADVIHLDELVRTAMESSEESAERTEIAEEEEEEEEEIETKLSDLITLDHNEEAPASPPRVVVVDIPDLISF.

In terms of domain architecture, ENTH spans 16-148 (SLIAADDILT…ILFHDGNRHR (133 aa)). Residues 283 to 307 (ESSEESAERTEIAEEEEEEEEEIET) form a disordered region. Over residues 295-305 (AEEEEEEEEEI) the composition is skewed to acidic residues.

The protein resides in the membrane. Its subcellular location is the clathrin-coated pit. It localises to the golgi apparatus. It is found in the cytoplasmic vesicle. The protein localises to the clathrin-coated vesicle. This is Putative clathrin assembly protein At1g14686 from Arabidopsis thaliana (Mouse-ear cress).